We begin with the raw amino-acid sequence, 279 residues long: Tryptophan 2,3-dioxygenase (279 aa).

Residues 48 to 52 (FIIQH), tyrosine 110, and arginine 114 each bind substrate. Histidine 237 is a binding site for heme. Threonine 251 provides a ligand contact to substrate.

It belongs to the tryptophan 2,3-dioxygenase family. As to quaternary structure, homotetramer. The cofactor is heme.

The enzyme catalyses L-tryptophan + O2 = N-formyl-L-kynurenine. The protein operates within amino-acid degradation; L-tryptophan degradation via kynurenine pathway; L-kynurenine from L-tryptophan: step 1/2. Its function is as follows. Heme-dependent dioxygenase that catalyzes the oxidative cleavage of the L-tryptophan (L-Trp) pyrrole ring and converts L-tryptophan to N-formyl-L-kynurenine. Catalyzes the oxidative cleavage of the indole moiety. The protein is Tryptophan 2,3-dioxygenase of Bradyrhizobium sp. (strain BTAi1 / ATCC BAA-1182).